The primary structure comprises 650 residues: Chaperone protein DnaK (650 aa).

A Phosphothreonine; by autocatalysis modification is found at Thr-200. The disordered stretch occupies residues 614–635 (AGAAGAAGAAEGAAHAGGAQQA).

The protein belongs to the heat shock protein 70 family.

Functionally, acts as a chaperone. This chain is Chaperone protein DnaK, found in Burkholderia lata (strain ATCC 17760 / DSM 23089 / LMG 22485 / NCIMB 9086 / R18194 / 383).